Reading from the N-terminus, the 339-residue chain is Holliday junction branch migration complex subunit RuvB (339 aa).

A large ATPase domain (RuvB-L) region spans residues 2–187; sequence KDVNEEERII…FGIIEHMQYY (186 aa). Residues L26, R27, G68, K71, T72, T73, 134-136, R177, Y187, and R224 contribute to the ATP site; that span reads EDF. T72 is a Mg(2+) binding site. The small ATPAse domain (RuvB-S) stretch occupies residues 188-258; it reads SVEDLEKIIQ…TTKHSLHLLE (71 aa). The head domain (RuvB-H) stretch occupies residues 261-339; it reads DEGLDQTDRK…QLGYPPKDEK (79 aa). Residues R316 and R321 each contribute to the DNA site.

The protein belongs to the RuvB family. As to quaternary structure, homohexamer. Forms an RuvA(8)-RuvB(12)-Holliday junction (HJ) complex. HJ DNA is sandwiched between 2 RuvA tetramers; dsDNA enters through RuvA and exits via RuvB. An RuvB hexamer assembles on each DNA strand where it exits the tetramer. Each RuvB hexamer is contacted by two RuvA subunits (via domain III) on 2 adjacent RuvB subunits; this complex drives branch migration. In the full resolvosome a probable DNA-RuvA(4)-RuvB(12)-RuvC(2) complex forms which resolves the HJ.

It is found in the cytoplasm. It catalyses the reaction ATP + H2O = ADP + phosphate + H(+). Functionally, the RuvA-RuvB-RuvC complex processes Holliday junction (HJ) DNA during genetic recombination and DNA repair, while the RuvA-RuvB complex plays an important role in the rescue of blocked DNA replication forks via replication fork reversal (RFR). RuvA specifically binds to HJ cruciform DNA, conferring on it an open structure. The RuvB hexamer acts as an ATP-dependent pump, pulling dsDNA into and through the RuvAB complex. RuvB forms 2 homohexamers on either side of HJ DNA bound by 1 or 2 RuvA tetramers; 4 subunits per hexamer contact DNA at a time. Coordinated motions by a converter formed by DNA-disengaged RuvB subunits stimulates ATP hydrolysis and nucleotide exchange. Immobilization of the converter enables RuvB to convert the ATP-contained energy into a lever motion, pulling 2 nucleotides of DNA out of the RuvA tetramer per ATP hydrolyzed, thus driving DNA branch migration. The RuvB motors rotate together with the DNA substrate, which together with the progressing nucleotide cycle form the mechanistic basis for DNA recombination by continuous HJ branch migration. Branch migration allows RuvC to scan DNA until it finds its consensus sequence, where it cleaves and resolves cruciform DNA. The protein is Holliday junction branch migration complex subunit RuvB of Lactobacillus johnsonii (strain CNCM I-12250 / La1 / NCC 533).